A 428-amino-acid chain; its full sequence is Serine--tRNA ligase (428 aa).

231–233 (TAE) lines the L-serine pocket. Residue 262–264 (RAE) participates in ATP binding. Glu285 contributes to the L-serine binding site. 349–352 (EISS) serves as a coordination point for ATP. Ser385 contacts L-serine.

It belongs to the class-II aminoacyl-tRNA synthetase family. Type-1 seryl-tRNA synthetase subfamily. As to quaternary structure, homodimer. The tRNA molecule binds across the dimer.

The protein resides in the cytoplasm. The enzyme catalyses tRNA(Ser) + L-serine + ATP = L-seryl-tRNA(Ser) + AMP + diphosphate + H(+). It catalyses the reaction tRNA(Sec) + L-serine + ATP = L-seryl-tRNA(Sec) + AMP + diphosphate + H(+). Its pathway is aminoacyl-tRNA biosynthesis; selenocysteinyl-tRNA(Sec) biosynthesis; L-seryl-tRNA(Sec) from L-serine and tRNA(Sec): step 1/1. In terms of biological role, catalyzes the attachment of serine to tRNA(Ser). Is also able to aminoacylate tRNA(Sec) with serine, to form the misacylated tRNA L-seryl-tRNA(Sec), which will be further converted into selenocysteinyl-tRNA(Sec). The chain is Serine--tRNA ligase from Methylorubrum extorquens (strain CM4 / NCIMB 13688) (Methylobacterium extorquens).